Reading from the N-terminus, the 411-residue chain is Short chain dehydrogenase ausT (411 aa).

Positions 105, 137, 249, and 253 each coordinate NADP(+). Y249 serves as the catalytic Proton donor. The Proton donor role is filled by Y263.

Belongs to the short-chain dehydrogenases/reductases (SDR) family.

It functions in the pathway secondary metabolite biosynthesis; terpenoid biosynthesis. Short chain dehydrogenase; part of the gene cluster that mediates the biosynthesis of calidodehydroaustin, a fungal meroterpenoid. The first step of the pathway is the synthesis of 3,5-dimethylorsellinic acid by the polyketide synthase ausA. 3,5-dimethylorsellinic acid is then prenylated by the polyprenyl transferase ausN. Further epoxidation by the FAD-dependent monooxygenase ausM and cyclization by the probable terpene cyclase ausL lead to the formation of protoaustinoid A. Protoaustinoid A is then oxidized to spiro-lactone preaustinoid A3 by the combined action of the FAD-binding monooxygenases ausB and ausC, and the dioxygenase ausE. Acid-catalyzed keto-rearrangement and ring contraction of the tetraketide portion of preaustinoid A3 by ausJ lead to the formation of preaustinoid A4. The aldo-keto reductase ausK, with the help of ausH, is involved in the next step by transforming preaustinoid A4 into isoaustinone which is in turn hydroxylated by the P450 monooxygenase ausI to form austinolide. The cytochrome P450 monooxygenase ausG modifies austinolide to austinol. Austinol is further acetylated to austin by the O-acetyltransferase ausP, which spontaneously changes to dehydroaustin. The cytochrome P450 monooxygenase ausR then converts dehydroaustin is into 7-dehydrodehydroaustin. The hydroxylation catalyzed by ausR permits the O-acetyltransferase ausQ to add an additional acetyl group to the molecule, leading to the formation of acetoxydehydroaustin. The short chain dehydrogenase ausT catalyzes the reduction of the double bond present between carbon atoms 1 and 2 to convert 7-dehydrodehydroaustin into 1,2-dihydro-7-hydroxydehydroaustin. AusQ catalyzes not only an acetylation reaction but also the addition of the PKS ausV diketide product to 1,2-dihydro-7-hydroxydehydroaustin, forming precalidodehydroaustin. Finally, the iron/alpha-ketoglutarate-dependent dioxygenase converts precalidodehydroaustin into calidodehydroaustin. The protein is Short chain dehydrogenase ausT of Aspergillus calidoustus.